The primary structure comprises 162 residues: Ribosomal RNA large subunit methyltransferase H (162 aa).

Gly108 lines the S-adenosyl-L-methionine pocket.

The protein belongs to the RNA methyltransferase RlmH family. Homodimer.

The protein resides in the cytoplasm. It carries out the reaction pseudouridine(1915) in 23S rRNA + S-adenosyl-L-methionine = N(3)-methylpseudouridine(1915) in 23S rRNA + S-adenosyl-L-homocysteine + H(+). In terms of biological role, specifically methylates the pseudouridine at position 1915 (m3Psi1915) in 23S rRNA. The protein is Ribosomal RNA large subunit methyltransferase H of Methylobacterium nodulans (strain LMG 21967 / CNCM I-2342 / ORS 2060).